Reading from the N-terminus, the 115-residue chain is Thionin-like protein 2 (115 aa).

An N-terminal signal peptide occupies residues 1-20 (MLVAVMIVMVIGNLLAQTAA).

This sequence belongs to the plant thionin (TC 1.C.44) family. Post-translationally, is disulfide-linked.

It localises to the secreted. In terms of biological role, may be involved in plant defense. This chain is Thionin-like protein 2, found in Arabidopsis thaliana (Mouse-ear cress).